The sequence spans 325 residues: Ferrochelatase (325 aa).

Histidine 172 and glutamate 267 together coordinate Fe cation.

This sequence belongs to the ferrochelatase family.

Its subcellular location is the cytoplasm. It catalyses the reaction heme b + 2 H(+) = protoporphyrin IX + Fe(2+). It participates in porphyrin-containing compound metabolism; protoheme biosynthesis; protoheme from protoporphyrin-IX: step 1/1. Catalyzes the ferrous insertion into protoporphyrin IX. The chain is Ferrochelatase from Acidobacterium capsulatum (strain ATCC 51196 / DSM 11244 / BCRC 80197 / JCM 7670 / NBRC 15755 / NCIMB 13165 / 161).